A 216-amino-acid polypeptide reads, in one-letter code: Protein InaA (216 aa).

The protein belongs to the protein kinase superfamily. KdkA/RfaP family.

May be an environmental sensor responsive to several stimuli, including internal pH, proton motive force, temperature, and possibly other unknown factors. The polypeptide is Protein InaA (inaA) (Escherichia coli (strain K12)).